The primary structure comprises 641 residues: Chaperone protein DnaK (641 aa).

Thr201 is subject to Phosphothreonine; by autocatalysis. The span at 604 to 622 (ASAEQGGAAPGADAGNAGK) shows a compositional bias: low complexity. The segment at 604-625 (ASAEQGGAAPGADAGNAGKAQD) is disordered.

Belongs to the heat shock protein 70 family.

Functionally, acts as a chaperone. This chain is Chaperone protein DnaK, found in Stenotrophomonas maltophilia (strain R551-3).